The chain runs to 125 residues: U-scoloptoxin(05)-Sm1a (125 aa).

Positions 1-20 (MNVLYTKIFFILILTRTSSA) are cleaved as a signal peptide.

The protein belongs to the scoloptoxin-05 family. In terms of processing, contains 4 disulfide bonds. As to expression, expressed by the venom gland.

The protein resides in the secreted. In Scolopendra morsitans (Tanzanian blue ringleg centipede), this protein is U-scoloptoxin(05)-Sm1a.